The chain runs to 115 residues: uncharacterized protein (115 aa).

The disordered stretch occupies residues 9-30 (EGLRERGASGKNEQKKKKKEKI).

This is an uncharacterized protein from Saccharomyces cerevisiae (strain ATCC 204508 / S288c) (Baker's yeast).